A 320-amino-acid chain; its full sequence is Cytochrome f (320 aa).

The signal sequence occupies residues 1-35; that stretch reads MQNRNTFSWVKEEMTRFISVSIMIYVITRTSISNA. Residues Tyr36, Cys56, Cys59, and His60 each coordinate heme. The chain crosses the membrane as a helical span at residues 286–306; it reads VQGLLFFLASVILAQIFLVLK.

The protein belongs to the cytochrome f family. In terms of assembly, the 4 large subunits of the cytochrome b6-f complex are cytochrome b6, subunit IV (17 kDa polypeptide, petD), cytochrome f and the Rieske protein, while the 4 small subunits are PetG, PetL, PetM and PetN. The complex functions as a dimer. Heme is required as a cofactor.

The protein resides in the plastid. Its subcellular location is the chloroplast thylakoid membrane. In terms of biological role, component of the cytochrome b6-f complex, which mediates electron transfer between photosystem II (PSII) and photosystem I (PSI), cyclic electron flow around PSI, and state transitions. The polypeptide is Cytochrome f (Calycanthus floridus var. glaucus (Eastern sweetshrub)).